Reading from the N-terminus, the 1043-residue chain is Phosphatidylinositol 4,5-bisphosphate 3-kinase catalytic subunit delta isoform (1043 aa).

In terms of domain architecture, PI3K-ABD spans 16–105; it reads ESQSVVVDFL…LPVLRLVARE (90 aa). Residues 187-278 enclose the PI3K-RBD domain; that stretch reads NRALLVNVKF…GLTPHLTMVH (92 aa). Residues 287-312 form a disordered region; it reads DEQSNPAPQVQKPRAKPPPIPAKKPS. Residues 319 to 476 form the C2 PI3K-type domain; it reads LEQPFSIELI…SAAALVIYLP (158 aa). A PIK helical domain is found at 496 to 673; the sequence is RHGERGRITE…GLIMEAYCRG (178 aa). Tyrosine 523 is modified (phosphotyrosine). The region spanning 744-1026 is the PI3K/PI4K catalytic domain; it reads CVEQCTFMDS…KFNEALRESW (283 aa). The G-loop stretch occupies residues 750 to 756; sequence FMDSKMK. The segment at 889 to 897 is catalytic loop; sequence GIGDRHSDN. Residues 908-934 form an activation loop region; the sequence is HIDFGHFLGNFKTKFGINRERVPFILT. Serine 1038 carries the phosphoserine; by autocatalysis modification.

This sequence belongs to the PI3/PI4-kinase family. In terms of assembly, heterodimer of a catalytic subunit PIK3CD and a p85 regulatory subunit (PIK3R1, PIK3R2 or PIK3R3). Interacts with ERAS and HRAS. In terms of processing, autophosphorylation on Ser-1038 results in the almost complete inactivation of the lipid kinase activity. In terms of tissue distribution, abundantly expressed in adult mouse spleen as well as in testis. Isoform 1 is expressed in spleen and lung (at protein level). Isoform 1 is expressed predominantly in leukocytes.

The protein resides in the cytoplasm. It carries out the reaction a 1,2-diacyl-sn-glycero-3-phospho-(1D-myo-inositol-4,5-bisphosphate) + ATP = a 1,2-diacyl-sn-glycero-3-phospho-(1D-myo-inositol-3,4,5-trisphosphate) + ADP + H(+). The enzyme catalyses a 1,2-diacyl-sn-glycero-3-phospho-(1D-myo-inositol) + ATP = a 1,2-diacyl-sn-glycero-3-phospho-(1D-myo-inositol-3-phosphate) + ADP + H(+). It catalyses the reaction 1-octadecanoyl-2-(5Z,8Z,11Z,14Z)-eicosatetraenoyl-sn-glycero-3-phospho-1D-myo-inositol 4,5-bisphosphate + ATP = 1-octadecanoyl-2-(5Z,8Z,11Z,14Z-eicosatetraenoyl)-sn-glycero-3-phospho-(1D-myo-inositol 3,4,5-triphosphate) + ADP + H(+). Its pathway is phospholipid metabolism; phosphatidylinositol phosphate biosynthesis. Activated by growth factors and cytokine receptors through a tyrosine-kinase-dependent mechanism. Activated by RAS. IC87114 inhibits lipid kinase activity and is selective in cells at doses up to 5-10 uM. Among other effects, IC87114 reduces allergic responses, prevents the recruitment of antigen-specific T cells into target tissue, and affects natural killer cell chemotaxis. Functionally, phosphoinositide-3-kinase (PI3K) phosphorylates phosphatidylinositol (PI) and its phosphorylated derivatives at position 3 of the inositol ring to produce 3-phosphoinositides. Uses ATP and PtdIns(4,5)P2 (phosphatidylinositol 4,5-bisphosphate) to generate phosphatidylinositol 3,4,5-trisphosphate (PIP3). PIP3 plays a key role by recruiting PH domain-containing proteins to the membrane, including AKT1 and PDPK1, activating signaling cascades involved in cell growth, survival, proliferation, motility and morphology. Mediates immune responses. Plays a role in B-cell development, proliferation, migration, and function. Required for B-cell receptor (BCR) signaling. Mediates B-cell proliferation response to anti-IgM, anti-CD40 and IL4 stimulation. Promotes cytokine production in response to TLR4 and TLR9. Required for antibody class switch mediated by TLR9. Involved in the antigen presentation function of B-cells. Involved in B-cell chemotaxis in response to CXCL13 and sphingosine 1-phosphate (S1P). Required for proliferation, signaling and cytokine production of naive, effector and memory T-cells. Required for T-cell receptor (TCR) signaling. Mediates TCR signaling events at the immune synapse. Activation by TCR leads to antigen-dependent memory T-cell migration and retention to antigenic tissues. Together with PIK3CG participates in T-cell development. Contributes to T-helper cell expansion and differentiation. Required for T-cell migration mediated by homing receptors SELL/CD62L, CCR7 and S1PR1 and antigen dependent recruitment of T-cells. Together with PIK3CG is involved in natural killer (NK) cell development and migration towards the sites of inflammation. Participates in NK cell receptor activation. Plays a role in NK cell maturation and cytokine production. Together with PIK3CG is involved in neutrophil chemotaxis and extravasation. Together with PIK3CG participates in neutrophil respiratory burst. Plays important roles in mast-cell development and mast cell mediated allergic response. Involved in stem cell factor (SCF)-mediated proliferation, adhesion and migration. Required for allergen-IgE-induced degranulation and cytokine release. The lipid kinase activity is required for its biological function. The polypeptide is Phosphatidylinositol 4,5-bisphosphate 3-kinase catalytic subunit delta isoform (Pik3cd) (Mus musculus (Mouse)).